A 141-amino-acid chain; its full sequence is Large ribosomal subunit protein uL11 (141 aa).

This sequence belongs to the universal ribosomal protein uL11 family. Part of the ribosomal stalk of the 50S ribosomal subunit. Interacts with L10 and the large rRNA to form the base of the stalk. L10 forms an elongated spine to which L12 dimers bind in a sequential fashion forming a multimeric L10(L12)X complex. One or more lysine residues are methylated.

In terms of biological role, forms part of the ribosomal stalk which helps the ribosome interact with GTP-bound translation factors. This Leptospira biflexa serovar Patoc (strain Patoc 1 / Ames) protein is Large ribosomal subunit protein uL11.